Consider the following 576-residue polypeptide: TRAF-type zinc finger domain-containing protein 1 (576 aa).

N-acetylalanine is present on A2. Residues I27–K103 form a TRAF-type zinc finger. A phosphoserine mark is found at S278, S320, S326, S327, S409, S415, S430, and S450. Residues E402–G432 are disordered. Over residues P411–R420 the composition is skewed to basic and acidic residues. 2 disordered regions span residues L465 to D491 and H529 to E576. A Phosphoserine modification is found at S531. The segment covering G540–S552 has biased composition (polar residues).

As to quaternary structure, interacts with MAVS, TICAM1, TRAF1, TRAF2, TRAF3 and TRAF6. Expressed in vascular smooth muscle cells.

In terms of biological role, negative feedback regulator that controls excessive innate immune responses. Regulates both Toll-like receptor 4 (TLR4) and DDX58/RIG1-like helicases (RLH) pathways. May inhibit the LTR pathway by direct interaction with TRAF6 and attenuation of NF-kappa-B activation. May negatively regulate the RLH pathway downstream from MAVS and upstream of NF-kappa-B and IRF3. This Rattus norvegicus (Rat) protein is TRAF-type zinc finger domain-containing protein 1 (Trafd1).